Here is a 151-residue protein sequence, read N- to C-terminus: Macrodomain Ter protein (151 aa).

It belongs to the MatP family. As to quaternary structure, homodimer.

It is found in the cytoplasm. In terms of biological role, required for spatial organization of the terminus region of the chromosome (Ter macrodomain) during the cell cycle. Prevents early segregation of duplicated Ter macrodomains during cell division. Binds specifically to matS, which is a 13 bp signature motif repeated within the Ter macrodomain. The chain is Macrodomain Ter protein from Cronobacter sakazakii (strain ATCC BAA-894) (Enterobacter sakazakii).